Here is a 310-residue protein sequence, read N- to C-terminus: Porphobilinogen deaminase (310 aa).

Cysteine 242 is modified (S-(dipyrrolylmethanemethyl)cysteine).

This sequence belongs to the HMBS family. Monomer. The cofactor is dipyrromethane.

The enzyme catalyses 4 porphobilinogen + H2O = hydroxymethylbilane + 4 NH4(+). It functions in the pathway porphyrin-containing compound metabolism; protoporphyrin-IX biosynthesis; coproporphyrinogen-III from 5-aminolevulinate: step 2/4. Tetrapolymerization of the monopyrrole PBG into the hydroxymethylbilane pre-uroporphyrinogen in several discrete steps. In Shewanella pealeana (strain ATCC 700345 / ANG-SQ1), this protein is Porphobilinogen deaminase.